The following is a 113-amino-acid chain: UPF0482 protein KPN78578_15540 (113 aa).

The signal sequence occupies residues 1–28 (MNMTLNKRWCLTAILALSAVVYTSSSYA). The disordered stretch occupies residues 38–60 (GDSAQSRQQASMEKEQWNDTRSL). Positions 39–48 (DSAQSRQQAS) are enriched in polar residues. Positions 49–59 (MEKEQWNDTRS) are enriched in basic and acidic residues.

This sequence belongs to the UPF0482 family.

The protein is UPF0482 protein KPN78578_15540 of Klebsiella pneumoniae subsp. pneumoniae (strain ATCC 700721 / MGH 78578).